Reading from the N-terminus, the 140-residue chain is Large ribosomal subunit protein uL11 (140 aa).

The protein belongs to the universal ribosomal protein uL11 family. Part of the ribosomal stalk of the 50S ribosomal subunit. Interacts with L10 and the large rRNA to form the base of the stalk. L10 forms an elongated spine to which L12 dimers bind in a sequential fashion forming a multimeric L10(L12)X complex. One or more lysine residues are methylated.

Forms part of the ribosomal stalk which helps the ribosome interact with GTP-bound translation factors. This Geobacter metallireducens (strain ATCC 53774 / DSM 7210 / GS-15) protein is Large ribosomal subunit protein uL11.